The primary structure comprises 397 residues: Arginine biosynthesis bifunctional protein ArgJ (397 aa).

Threonine 147, lysine 173, threonine 184, glutamate 270, asparagine 392, and threonine 397 together coordinate substrate. The active-site Nucleophile is threonine 184.

Belongs to the ArgJ family. In terms of assembly, heterotetramer of two alpha and two beta chains.

The protein resides in the cytoplasm. The enzyme catalyses N(2)-acetyl-L-ornithine + L-glutamate = N-acetyl-L-glutamate + L-ornithine. The catalysed reaction is L-glutamate + acetyl-CoA = N-acetyl-L-glutamate + CoA + H(+). The protein operates within amino-acid biosynthesis; L-arginine biosynthesis; L-ornithine and N-acetyl-L-glutamate from L-glutamate and N(2)-acetyl-L-ornithine (cyclic): step 1/1. It functions in the pathway amino-acid biosynthesis; L-arginine biosynthesis; N(2)-acetyl-L-ornithine from L-glutamate: step 1/4. Catalyzes two activities which are involved in the cyclic version of arginine biosynthesis: the synthesis of N-acetylglutamate from glutamate and acetyl-CoA as the acetyl donor, and of ornithine by transacetylation between N(2)-acetylornithine and glutamate. In Streptococcus thermophilus (strain ATCC BAA-250 / LMG 18311), this protein is Arginine biosynthesis bifunctional protein ArgJ.